The sequence spans 644 residues: 1-deoxy-D-xylulose-5-phosphate synthase (644 aa).

Residues His78 and 120–122 each bind thiamine diphosphate; that span reads GHA. Asp149 lines the Mg(2+) pocket. Thiamine diphosphate-binding positions include 150–151, Asn178, and Glu373; that span reads AA. Position 178 (Asn178) interacts with Mg(2+).

Belongs to the transketolase family. DXPS subfamily. As to quaternary structure, homodimer. The cofactor is Mg(2+). Requires thiamine diphosphate as cofactor.

The catalysed reaction is D-glyceraldehyde 3-phosphate + pyruvate + H(+) = 1-deoxy-D-xylulose 5-phosphate + CO2. It functions in the pathway metabolic intermediate biosynthesis; 1-deoxy-D-xylulose 5-phosphate biosynthesis; 1-deoxy-D-xylulose 5-phosphate from D-glyceraldehyde 3-phosphate and pyruvate: step 1/1. Functionally, catalyzes the acyloin condensation reaction between C atoms 2 and 3 of pyruvate and glyceraldehyde 3-phosphate to yield 1-deoxy-D-xylulose-5-phosphate (DXP). The sequence is that of 1-deoxy-D-xylulose-5-phosphate synthase from Chlamydia caviae (strain ATCC VR-813 / DSM 19441 / 03DC25 / GPIC) (Chlamydophila caviae).